A 436-amino-acid chain; its full sequence is GTPase Der (436 aa).

EngA-type G domains are found at residues 4–167 and 176–351; these read PVIA…PKIE and IRFS…ESHS. Residues 10 to 17, 57 to 61, 119 to 122, 182 to 189, 229 to 233, and 294 to 297 contribute to the GTP site; these read GRPNVGKS, DTGGI, NKVD, DTAGM, and NKWD. The KH-like domain occupies 352 to 436; it reads IRVQTNVLND…PIHIIARARD (85 aa).

The protein belongs to the TRAFAC class TrmE-Era-EngA-EngB-Septin-like GTPase superfamily. EngA (Der) GTPase family. In terms of assembly, associates with the 50S ribosomal subunit.

In terms of biological role, GTPase that plays an essential role in the late steps of ribosome biogenesis. This chain is GTPase Der, found in Bacillus mycoides (strain KBAB4) (Bacillus weihenstephanensis).